The primary structure comprises 97 residues: Peptide YY (97 aa).

A signal peptide spans 1–28 (MMSGRRSWPAMATVLLTLLVCLGELVDA). The residue at position 41 (serine 41) is a Phosphoserine. Phenylalanine 64 bears the Phenylalanine amide mark. The propeptide occupies 68-97 (DFSEALLSILLFPDREDPPVKSRPEGAYLW).

It belongs to the NPY family.

The protein localises to the secreted. In terms of biological role, this gut peptide inhibits exocrine pancreatic secretion, has a vasoconstrictory action and inhibitis jejunal and colonic mobility. This Bos taurus (Bovine) protein is Peptide YY (PYY).